The sequence spans 247 residues: 2,3-bisphosphoglycerate-dependent phosphoglycerate mutase (247 aa).

Residues 8–15 (RHGESTWN), 21–22 (TG), Arg60, 87–90 (ERHY), Lys98, 114–115 (RR), and 183–184 (GN) contribute to the substrate site. The active-site Tele-phosphohistidine intermediate is His9. Glu87 functions as the Proton donor/acceptor in the catalytic mechanism.

It belongs to the phosphoglycerate mutase family. BPG-dependent PGAM subfamily. In terms of assembly, homodimer.

The catalysed reaction is (2R)-2-phosphoglycerate = (2R)-3-phosphoglycerate. It functions in the pathway carbohydrate degradation; glycolysis; pyruvate from D-glyceraldehyde 3-phosphate: step 3/5. Catalyzes the interconversion of 2-phosphoglycerate and 3-phosphoglycerate. The chain is 2,3-bisphosphoglycerate-dependent phosphoglycerate mutase from Paracidovorax citrulli (strain AAC00-1) (Acidovorax citrulli).